The sequence spans 417 residues: Creatine kinase U-type, mitochondrial (417 aa).

The transit peptide at 1-39 directs the protein to the mitochondrion; it reads MAGPFSRLLSARPGLRLLALAGAGSLAAGFLLRPEPVRA. A cardiolipin-binding region spans residues 40-64; that stretch reads ASERRRLYPPSAEYPDLRKHNNCMA. In terms of domain architecture, Phosphagen kinase N-terminal spans 45–131; sequence RLYPPSAEYP…FDPVIQERHN (87 aa). Ser151 carries the phosphoserine modification. In terms of domain architecture, Phosphagen kinase C-terminal spans 158 to 400; sequence YVLSSRVRTG…NYLIDCERRL (243 aa). 161–165 lines the ATP pocket; the sequence is SSRVR. Phosphoserine is present on Ser196. Residue Thr213 is modified to Phosphothreonine. His224 serves as a coordination point for ATP. At Ser232 the chain carries Phosphoserine. ATP-binding positions include Arg269, Arg325, 353–358, and Asp368; that span reads RGTGGV. At Thr355 the chain carries Phosphothreonine.

Belongs to the ATP:guanido phosphotransferase family. As to quaternary structure, exists as an octamer composed of four MTCK homodimers.

It localises to the mitochondrion inner membrane. The catalysed reaction is creatine + ATP = N-phosphocreatine + ADP + H(+). In terms of biological role, reversibly catalyzes the transfer of phosphate between ATP and various phosphogens (e.g. creatine phosphate). Creatine kinase isoenzymes play a central role in energy transduction in tissues with large, fluctuating energy demands, such as skeletal muscle, heart, brain and spermatozoa. The protein is Creatine kinase U-type, mitochondrial (CKMT1A) of Homo sapiens (Human).